A 211-amino-acid polypeptide reads, in one-letter code: MFSYYFQGLALGAAMILPLGPQNAFVMNQGIRRQYHIMIALLCAISDLVLICAGIFGGSALLMQSPWLLALVTWGGVAFLLWYGFGAFKTAMSSNIELASAEVMKQGRWKIIATMLAVTWLNPHVYLDTFVVLGSLGGQLDVEPKRWFALGTISASFLWFFGLALLAAWLAPRLRTAKAQRIINLVVGCVMWFIALQLARDGIAHAQALFS.

Over Met-1 to Met-38 the chain is Cytoplasmic. The chain crosses the membrane as a helical span at residues Ile-39–Gly-58. Over Ser-59–Met-63 the chain is Periplasmic. The helical transmembrane segment at Gln-64–Ala-91 threads the bilayer. At Met-92–Glu-102 the chain is on the cytoplasmic side. The chain crosses the membrane as a helical span at residues Val-103 to Phe-130. Topologically, residues Val-131–Leu-140 are periplasmic. The chain crosses the membrane as a helical span at residues Asp-141 to Leu-170. At Ala-171–Arg-173 the chain is on the cytoplasmic side. The chain crosses the membrane as a helical span at residues Leu-174–Arg-200. Topologically, residues Asp-201–Ser-211 are periplasmic.

The protein belongs to the LysE/ArgO transporter (TC 2.A.75) family. Monomer.

It localises to the cell inner membrane. The enzyme catalyses L-arginine(in) = L-arginine(out). Involved in the export of arginine. Important to control the intracellular level of arginine and the correct balance between arginine and lysine. May also be involved in the export of canavanine (a plant-derived antimetabolite). The chain is Arginine exporter protein ArgO from Escherichia coli (strain K12).